Consider the following 203-residue polypeptide: bMERB domain-containing protein 1 (203 aa).

Residues 3-149 enclose the bMERB domain; it reads LKQSLSVHLE…EQEEDKEMAD (147 aa). The interval 160–186 is disordered; the sequence is KVTKSSASSRAEKKAEPPPSKPTVAKT.

The protein is bMERB domain-containing protein 1 (Bmerb1) of Rattus norvegicus (Rat).